The following is a 338-amino-acid chain: Nicotinate-nucleotide--dimethylbenzimidazole phosphoribosyltransferase (338 aa).

E305 functions as the Proton acceptor in the catalytic mechanism.

The protein belongs to the CobT family.

The enzyme catalyses 5,6-dimethylbenzimidazole + nicotinate beta-D-ribonucleotide = alpha-ribazole 5'-phosphate + nicotinate + H(+). It functions in the pathway nucleoside biosynthesis; alpha-ribazole biosynthesis; alpha-ribazole from 5,6-dimethylbenzimidazole: step 1/2. Functionally, catalyzes the synthesis of alpha-ribazole-5'-phosphate from nicotinate mononucleotide (NAMN) and 5,6-dimethylbenzimidazole (DMB). The protein is Nicotinate-nucleotide--dimethylbenzimidazole phosphoribosyltransferase of Rhizobium rhizogenes (strain K84 / ATCC BAA-868) (Agrobacterium radiobacter).